The sequence spans 335 residues: RNA 3'-terminal phosphate cyclase (335 aa).

Residues Gln-101 and 282 to 285 (HMGD) each bind ATP. Catalysis depends on His-306, which acts as the Tele-AMP-histidine intermediate.

Belongs to the RNA 3'-terminal cyclase family. Type 1 subfamily.

Its subcellular location is the cytoplasm. The catalysed reaction is a 3'-end 3'-phospho-ribonucleotide-RNA + ATP = a 3'-end 2',3'-cyclophospho-ribonucleotide-RNA + AMP + diphosphate. Catalyzes the conversion of 3'-phosphate to a 2',3'-cyclic phosphodiester at the end of RNA. The mechanism of action of the enzyme occurs in 3 steps: (A) adenylation of the enzyme by ATP; (B) transfer of adenylate to an RNA-N3'P to produce RNA-N3'PP5'A; (C) and attack of the adjacent 2'-hydroxyl on the 3'-phosphorus in the diester linkage to produce the cyclic end product. The biological role of this enzyme is unknown but it is likely to function in some aspects of cellular RNA processing. The sequence is that of RNA 3'-terminal phosphate cyclase from Sulfolobus acidocaldarius (strain ATCC 33909 / DSM 639 / JCM 8929 / NBRC 15157 / NCIMB 11770).